The primary structure comprises 278 residues: S-formylglutathione hydrolase YeiG (278 aa).

Residues Ser-145, Asp-223, and His-256 each act as charge relay system in the active site.

It belongs to the esterase D family.

The catalysed reaction is S-formylglutathione + H2O = formate + glutathione + H(+). Serine hydrolase involved in the detoxification of formaldehyde. Hydrolyzes S-formylglutathione to glutathione and formate. The polypeptide is S-formylglutathione hydrolase YeiG (yeiG) (Escherichia coli O139:H28 (strain E24377A / ETEC)).